A 28-amino-acid chain; its full sequence is Gamma-conotoxin-like de7a (28 aa).

Disulfide bonds link Cys-2–Cys-18, Cys-9–Cys-22, and Cys-17–Cys-27. A 4-hydroxyproline modification is found at Pro-4. 4-carboxyglutamate occurs at positions 13 and 16. Position 28 is a serine amide (Ser-28).

Belongs to the conotoxin O1 superfamily. Expressed by the venom duct.

The protein resides in the secreted. Its function is as follows. Gamma-conotoxins may act on voltage-gated non-specific cation pacemaker channels (HCN). In Conasprella delessertii (Sozon's cone), this protein is Gamma-conotoxin-like de7a.